Consider the following 155-residue polypeptide: Protein archease-like (155 aa).

The Ca(2+) site is built by Asp-26, Asp-154, and Ile-155.

It belongs to the archease family.

In terms of biological role, component of the tRNA-splicing ligase complex required to facilitate the enzymatic turnover of catalytic subunit RtcB (F16A11.2). The chain is Protein archease-like from Caenorhabditis elegans.